A 124-amino-acid chain; its full sequence is uncharacterized protein (124 aa).

The protein resides in the cytoplasm. It localises to the nucleus. This is an uncharacterized protein from Schizosaccharomyces pombe (strain 972 / ATCC 24843) (Fission yeast).